Here is a 159-residue protein sequence, read N- to C-terminus: Thymic stromal lymphopoietin (159 aa).

A signal peptide spans 1–28 (MFPFALLYVLSVSFRKIFILQLVGLVLT). 3 disulfide bridges follow: cysteine 34/cysteine 110, cysteine 69/cysteine 75, and cysteine 90/cysteine 137. Asparagine 64 carries N-linked (GlcNAc...) asparagine glycosylation. Asparagine 119 carries an N-linked (GlcNAc...) asparagine glycan.

In terms of assembly, interacts with a receptor composed of CRLF2 and IL7R. Binding of TSLP to CRLF2/TSLPR is a mechanistic prerequisite for recruitment of IL7R to the high-affinity ternary complex. As to expression, isoform 1 is expressed in a number of tissues including heart, liver and prostate. Isoform 2 is the predominant form in keratinocytes of oral mucosa, skin and in salivary glands. It is secreted into saliva.

The protein resides in the secreted. Cytokine that induces the release of T-cell-attracting chemokines from monocytes and, in particular, enhances the maturation of CD11c(+) dendritic cells. Can induce allergic inflammation by directly activating mast cells. In terms of biological role, may act as an antimicrobial peptide in the oral cavity and on the skin. The polypeptide is Thymic stromal lymphopoietin (TSLP) (Homo sapiens (Human)).